A 384-amino-acid polypeptide reads, in one-letter code: MSWQEKINAALDARRTADALRRRYPVAQGAGRWLVADDRQYLNFSSNDYLGLSHHPQIIRAWQQGAEKFGVGSGGSGHVSGYSVVHQALEEELAEWLGYSRALLFISGFAANQAVIAAMMAKEDRIVADRLSHASLLEAASLSPSQLRRFTHNDVAHLARLLASPCPGQQLVVTEGVFSMDGDSAPLAEIQQVTQQHNGWLMVDDAHGTGVIGEQGRGSCWLQKVKPELLVVTFGKGFGVSGAAVLCSSTVADYLLQFARHLIYSTSMPPAQAQALRASLAVIRRDEGDARREKLVSLIARFRAGVQDLPFTLADSCSAIQPLIVGDNSRALQLAEKLRQQGCWVTAIRPPTVPAGTARLRLTLTAAHEMQDIDRLLEVLHGNG.

Residue Arg-21 coordinates substrate. Pyridoxal 5'-phosphate is bound at residue 108 to 109 (GF). Residue His-133 coordinates substrate. Positions 179, 207, and 233 each coordinate pyridoxal 5'-phosphate. Lys-236 is modified (N6-(pyridoxal phosphate)lysine). Residue Thr-352 coordinates substrate.

Belongs to the class-II pyridoxal-phosphate-dependent aminotransferase family. BioF subfamily. As to quaternary structure, homodimer. Requires pyridoxal 5'-phosphate as cofactor.

It catalyses the reaction 6-carboxyhexanoyl-[ACP] + L-alanine + H(+) = (8S)-8-amino-7-oxononanoate + holo-[ACP] + CO2. It participates in cofactor biosynthesis; biotin biosynthesis. Catalyzes the decarboxylative condensation of pimeloyl-[acyl-carrier protein] and L-alanine to produce 8-amino-7-oxononanoate (AON), [acyl-carrier protein], and carbon dioxide. The polypeptide is 8-amino-7-oxononanoate synthase (Shigella sonnei (strain Ss046)).